We begin with the raw amino-acid sequence, 259 residues long: Ribonuclease PH (259 aa).

Phosphate is bound by residues R88 and 126–128; that span reads GTR.

This sequence belongs to the RNase PH family. As to quaternary structure, homohexameric ring arranged as a trimer of dimers.

The catalysed reaction is tRNA(n+1) + phosphate = tRNA(n) + a ribonucleoside 5'-diphosphate. Phosphorolytic 3'-5' exoribonuclease that plays an important role in tRNA 3'-end maturation. Removes nucleotide residues following the 3'-CCA terminus of tRNAs; can also add nucleotides to the ends of RNA molecules by using nucleoside diphosphates as substrates, but this may not be physiologically important. Probably plays a role in initiation of 16S rRNA degradation (leading to ribosome degradation) during starvation. This Mycobacterium ulcerans (strain Agy99) protein is Ribonuclease PH.